Consider the following 175-residue polypeptide: Large ribosomal subunit protein uL10 (175 aa).

It belongs to the universal ribosomal protein uL10 family. In terms of assembly, part of the ribosomal stalk of the 50S ribosomal subunit. The N-terminus interacts with L11 and the large rRNA to form the base of the stalk. The C-terminus forms an elongated spine to which L12 dimers bind in a sequential fashion forming a multimeric L10(L12)X complex.

In terms of biological role, forms part of the ribosomal stalk, playing a central role in the interaction of the ribosome with GTP-bound translation factors. In Xylella fastidiosa (strain 9a5c), this protein is Large ribosomal subunit protein uL10 (rplJ).